The following is a 672-amino-acid chain: tRNA 5-methylaminomethyl-2-thiouridine biosynthesis bifunctional protein MnmC (672 aa).

The tRNA (mnm(5)s(2)U34)-methyltransferase stretch occupies residues 1 to 241; it reads MLKVTTAHIH…KRECLQGFKP (241 aa). The interval 271-672 is FAD-dependent cmnm(5)s(2)U34 oxidoreductase; sequence IGGGISSLFS…RKLLKGTPVK (402 aa).

It in the N-terminal section; belongs to the methyltransferase superfamily. tRNA (mnm(5)s(2)U34)-methyltransferase family. The protein in the C-terminal section; belongs to the DAO family. FAD serves as cofactor.

It localises to the cytoplasm. The catalysed reaction is 5-aminomethyl-2-thiouridine(34) in tRNA + S-adenosyl-L-methionine = 5-methylaminomethyl-2-thiouridine(34) in tRNA + S-adenosyl-L-homocysteine + H(+). Its function is as follows. Catalyzes the last two steps in the biosynthesis of 5-methylaminomethyl-2-thiouridine (mnm(5)s(2)U) at the wobble position (U34) in tRNA. Catalyzes the FAD-dependent demodification of cmnm(5)s(2)U34 to nm(5)s(2)U34, followed by the transfer of a methyl group from S-adenosyl-L-methionine to nm(5)s(2)U34, to form mnm(5)s(2)U34. This Mannheimia succiniciproducens (strain KCTC 0769BP / MBEL55E) protein is tRNA 5-methylaminomethyl-2-thiouridine biosynthesis bifunctional protein MnmC.